We begin with the raw amino-acid sequence, 282 residues long: Probable endonuclease 4 (282 aa).

9 residues coordinate Zn(2+): H69, H109, E145, D179, H182, H216, D229, H231, and E261.

Belongs to the AP endonuclease 2 family. Zn(2+) serves as cofactor.

It catalyses the reaction Endonucleolytic cleavage to 5'-phosphooligonucleotide end-products.. Endonuclease IV plays a role in DNA repair. It cleaves phosphodiester bonds at apurinic or apyrimidinic (AP) sites, generating a 3'-hydroxyl group and a 5'-terminal sugar phosphate. The protein is Probable endonuclease 4 of Campylobacter fetus subsp. fetus (strain 82-40).